The primary structure comprises 115 residues: ATP synthase subunits region ORF 7 (115 aa).

This chain is ATP synthase subunits region ORF 7, found in Fuscovulum blasticum (Rhodobacter blasticus).